A 191-amino-acid polypeptide reads, in one-letter code: Shikimate kinase (191 aa).

24–29 provides a ligand contact to ATP; it reads GSGKTS. Thr-28 provides a ligand contact to Mg(2+). Residues Asp-46, Arg-70, and Gly-92 each contribute to the substrate site. Arg-130 serves as a coordination point for ATP. Position 149 (Arg-149) interacts with substrate.

The protein belongs to the shikimate kinase family. Monomer. The cofactor is Mg(2+).

The protein resides in the cytoplasm. The enzyme catalyses shikimate + ATP = 3-phosphoshikimate + ADP + H(+). The protein operates within metabolic intermediate biosynthesis; chorismate biosynthesis; chorismate from D-erythrose 4-phosphate and phosphoenolpyruvate: step 5/7. In terms of biological role, catalyzes the specific phosphorylation of the 3-hydroxyl group of shikimic acid using ATP as a cosubstrate. This chain is Shikimate kinase, found in Parasynechococcus marenigrum (strain WH8102).